Consider the following 343-residue polypeptide: MEAGIVEAAGMDWEAFQTVAWTLVKIMALVVPLMLGVAYLTYAERKIIGWMQVRIGPNRVGFQGLLQPIADAVKLLMKEIIIPSGASRALFILGPILAIAPALAAWAVIPFSDGLVLADINAGLLYVMAITSMGVYGVIIAGWASNSKYAFLGAMRSAAQIVSYEIAMGFALVGVLMASQSLNLSAIVQGQAGGIQQWYLWPLFPLFVVYLVAGVAETNRAPFDVAEGESEIVAGFHVEYSGMAFAVFFLAEYANMILVAALTTLMFLGGWLSPVAFLPDGIVWWLLKTGFVLFLFLWFRATFPRYRYDQIMRLGWKVFIPITIVWIVFVGGMMQTPYGHLFH.

Helical transmembrane passes span 19–39 (VAWT…GVAY), 89–109 (ALFI…WAVI), 124–144 (LLYV…AGWA), 158–178 (AAQI…VLMA), 198–218 (WYLW…VAET), 257–277 (ILVA…PVAF), 279–299 (PDGI…FLWF), and 314–334 (LGWK…GGMM).

It belongs to the complex I subunit 1 family. In terms of assembly, NDH-1 is composed of 14 different subunits. Subunits NuoA, H, J, K, L, M, N constitute the membrane sector of the complex.

It is found in the cell inner membrane. It carries out the reaction a quinone + NADH + 5 H(+)(in) = a quinol + NAD(+) + 4 H(+)(out). Its function is as follows. NDH-1 shuttles electrons from NADH, via FMN and iron-sulfur (Fe-S) centers, to quinones in the respiratory chain. The immediate electron acceptor for the enzyme in this species is believed to be ubiquinone. Couples the redox reaction to proton translocation (for every two electrons transferred, four hydrogen ions are translocated across the cytoplasmic membrane), and thus conserves the redox energy in a proton gradient. This subunit may bind ubiquinone. The chain is NADH-quinone oxidoreductase subunit H from Thiobacillus denitrificans (strain ATCC 25259 / T1).